We begin with the raw amino-acid sequence, 1133 residues long: Protein cordon-bleu (1133 aa).

Positions 1 to 11 (MKARAPPPPGK) are enriched in pro residues. A disordered region spans residues 1–25 (MKARAPPPPGKPAAQNVHSEQKLPH). Phosphoserine is present on residues serine 31, serine 34, serine 196, serine 219, serine 256, and serine 278. Disordered regions lie at residues 246 to 393 (AEHL…SVNG) and 442 to 568 (QGGI…GQAS). The segment covering 272–301 (CVTTPNSPSLHSRSLTLGPSLSLGNISGMS) has biased composition (polar residues). The KKRRAP 1 signature appears at 307-312 (KKRRAP). Phosphoserine is present on residues serine 330 and serine 333. A KKRRAP 2 motif is present at residues 340-345 (KKRRAP). Residues 345–358 (PAPPPPQPPPPSPV) show a composition bias toward pro residues. Serine 356 is modified (phosphoserine). Over residues 361-371 (NRKEDKEENRK) the composition is skewed to basic and acidic residues. Polar residues-rich tracts occupy residues 382-393 (TDTSSLTSSVNG) and 442-464 (QGGIASQRSHLPPYQTEQSQPFI). Position 447 is a phosphoserine (serine 447). Residues 512-524 (STDDPKAKDKDKM) are compositionally biased toward basic and acidic residues. A Phosphoserine modification is found at serine 614. Residues 664 to 720 (APSTTITATSEKPQRDETKAGFTLTTPEQQPASQEYGAPPEEDRSRPHSAVSCPVKV) form a disordered region. 2 stretches are compositionally biased toward polar residues: residues 665-674 (PSTTITATSE) and 686-696 (TLTTPEQQPAS). The residue at position 924 (serine 924) is a Phosphoserine. Disordered regions lie at residues 942–961 (PSPLSADGQNSDDALPSSIF) and 990–1018 (HTSGGRDKLRKTAEQASEGRPKKPSYVEA). 2 consecutive WH2 domains span residues 981-1001 (LHSALMEAIHTSGGRDKLRKT) and 1021-1041 (ERSALLAAIRGHSGTLSLRKV). Residues 993–1010 (GGRDKLRKTAEQASEGRP) show a composition bias toward basic and acidic residues. The interval 1063–1091 (DKPQQEDRGLPPPPALPPPSTPASQVPSA) is disordered. Over residues 1072–1083 (LPPPPALPPPST) the composition is skewed to pro residues. At serine 1099 the chain carries Phosphoserine. Positions 1109–1129 (ARQALMDAIRSGTGAARLRKV) constitute a WH2 3 domain.

In terms of assembly, identified in a complex composed of ACTA1, COBL, GSN AND TMSB4X. Identified in a complex composed of COBL, PACSIN1 and WASL. Interacts with PACSIN1, PACSIN2 and PACSIN3. Interacts (via WH2 domains) with actin monomers. Interacts with both PACSIN1 and DBNL. As to expression, detected in brain (at protein level).

It localises to the cell membrane. Its subcellular location is the cytoplasm. The protein localises to the cytoskeleton. It is found in the cell projection. The protein resides in the ruffle. It localises to the cytosol. Functionally, plays an important role in the reorganization of the actin cytoskeleton. Binds to and sequesters actin monomers (G actin). Nucleates actin polymerization by assembling three actin monomers in cross-filament orientation and thereby promotes growth of actin filaments at the barbed end. Can also mediate actin depolymerization at barbed ends and severing of actin filaments. Promotes formation of cell ruffles. Regulates dendrite branching in Purkinje cells. Regulates neuron morphogenesis and increases branching of axons and dendrites. The sequence is that of Protein cordon-bleu (Cobl) from Rattus norvegicus (Rat).